The following is a 320-amino-acid chain: Cytochrome f (320 aa).

Residues 1-35 (MQTRNAFSWLKKQITRSISVSLMIYILTRTSISSA) form the signal peptide. 4 residues coordinate heme: tyrosine 36, cysteine 56, cysteine 59, and histidine 60. Residues 286–305 (VQGLLFFLASVILAQIFLVL) traverse the membrane as a helical segment.

The protein belongs to the cytochrome f family. The 4 large subunits of the cytochrome b6-f complex are cytochrome b6, subunit IV (17 kDa polypeptide, petD), cytochrome f and the Rieske protein, while the 4 small subunits are PetG, PetL, PetM and PetN. The complex functions as a dimer. Heme is required as a cofactor.

It localises to the plastid. The protein resides in the chloroplast thylakoid membrane. Component of the cytochrome b6-f complex, which mediates electron transfer between photosystem II (PSII) and photosystem I (PSI), cyclic electron flow around PSI, and state transitions. The protein is Cytochrome f of Atropa belladonna (Belladonna).